Reading from the N-terminus, the 175-residue chain is 3-hydroxydecanoyl-[acyl-carrier-protein] dehydratase (175 aa).

His-71 is a catalytic residue.

Belongs to the thioester dehydratase family. FabA subfamily. Homodimer.

The protein localises to the cytoplasm. The enzyme catalyses a (3R)-hydroxyacyl-[ACP] = a (2E)-enoyl-[ACP] + H2O. It carries out the reaction (3R)-hydroxydecanoyl-[ACP] = (2E)-decenoyl-[ACP] + H2O. The catalysed reaction is (2E)-decenoyl-[ACP] = (3Z)-decenoyl-[ACP]. Its pathway is lipid metabolism; fatty acid biosynthesis. In terms of biological role, necessary for the introduction of cis unsaturation into fatty acids. Catalyzes the dehydration of (3R)-3-hydroxydecanoyl-ACP to E-(2)-decenoyl-ACP and then its isomerization to Z-(3)-decenoyl-ACP. Can catalyze the dehydratase reaction for beta-hydroxyacyl-ACPs with saturated chain lengths up to 16:0, being most active on intermediate chain length. This chain is 3-hydroxydecanoyl-[acyl-carrier-protein] dehydratase, found in Rhodopseudomonas palustris (strain ATCC BAA-98 / CGA009).